We begin with the raw amino-acid sequence, 130 residues long: Large-conductance mechanosensitive channel (130 aa).

Over 1-14 (MWNEFKAFAMRGNI) the chain is Cytoplasmic. The chain crosses the membrane as a helical span at residues 15-43 (VDLAIGVVIGGAFGKIVTSLVNDIIMPLV). Topologically, residues 44–65 (GLLLGGLDFSGLSFTFGDAVVK) are extracellular. A helical membrane pass occupies residues 66 to 85 (YGSFIQTIVNFLIISFSIFI). The Cytoplasmic segment spans residues 86–130 (VIRTLNGLRRKKEAEEEAAEEAVDAQEELLKEIRDLLKQQAKSPE).

Belongs to the MscL family. Homopentamer.

It localises to the cell membrane. Functionally, channel that opens in response to stretch forces in the membrane lipid bilayer. Forms a nonselective ion channel with a conductance of about 4 nanosiemens. May participate in the regulation of osmotic pressure changes within the cell. The polypeptide is Large-conductance mechanosensitive channel (Bacillus subtilis (strain 168)).